A 271-amino-acid polypeptide reads, in one-letter code: 3-methyl-2-oxobutanoate hydroxymethyltransferase 2 (271 aa).

Mg(2+) is bound by residues Asp53 and Asp92. Residues Asp53–Ser54, Asp92, and Lys120 each bind 3-methyl-2-oxobutanoate. Glu122 is a binding site for Mg(2+). The active-site Proton acceptor is the Glu189.

Belongs to the PanB family. In terms of assembly, homodecamer; pentamer of dimers. Mg(2+) serves as cofactor.

The protein localises to the cytoplasm. It carries out the reaction 3-methyl-2-oxobutanoate + (6R)-5,10-methylene-5,6,7,8-tetrahydrofolate + H2O = 2-dehydropantoate + (6S)-5,6,7,8-tetrahydrofolate. It functions in the pathway cofactor biosynthesis; (R)-pantothenate biosynthesis; (R)-pantoate from 3-methyl-2-oxobutanoate: step 1/2. Functionally, catalyzes the reversible reaction in which hydroxymethyl group from 5,10-methylenetetrahydrofolate is transferred onto alpha-ketoisovalerate to form ketopantoate. The sequence is that of 3-methyl-2-oxobutanoate hydroxymethyltransferase 2 from Burkholderia lata (strain ATCC 17760 / DSM 23089 / LMG 22485 / NCIMB 9086 / R18194 / 383).